The following is a 349-amino-acid chain: MIINSLKRFGITTGAAASAAAKAAVIGLLNREKRNTVVIPTPIGLRLEIPVEKVEIDSGIACAEVKKFSGDNPDILDGLVIRCCAKLNESNEIVIVGGKGVGKVTRSGLKATMGETAISPTVRDMVINAIREVTDKGIQITIEVPNGDIIAENTLNKMVGIVGGISILGTTGIETPVSDDDYLEHIKCELNVIRQSYDFVVIAPGNSAAKYASKLFDSNSIIKVGDRIGDSIKLASSVFRKVILAGLPAKLLKVYAGIFNTHYSQGDARLESLTHASVLAGLPYDVLTKITNALSVEEAFTYMTKEQRRKVMKIVAEKILSRIKSFNGDINFCVIIFDYDSESLSRVGC.

It belongs to the CbiD family.

The catalysed reaction is Co-precorrin-5B + S-adenosyl-L-methionine = Co-precorrin-6A + S-adenosyl-L-homocysteine. It functions in the pathway cofactor biosynthesis; adenosylcobalamin biosynthesis; cob(II)yrinate a,c-diamide from sirohydrochlorin (anaerobic route): step 6/10. In terms of biological role, catalyzes the methylation of C-1 in cobalt-precorrin-5B to form cobalt-precorrin-6A. The protein is Cobalt-precorrin-5B C(1)-methyltransferase of Saccharolobus islandicus (strain L.S.2.15 / Lassen #1) (Sulfolobus islandicus).